Here is a 345-residue protein sequence, read N- to C-terminus: MKQLKRKRKSNFSVQETQTLLKEITKRKEVIFSKQLNTTINVMKRMAWEEIAQCVNAVGEGEQRTGTEVKRRYLDWRALMKRKKMKANIKLVGSGFPLPTSDLDDSLTEEIDEKIGFRSDTNFDWQNVADFRDAGGSLTEVKVEEEERDPQSPEFEIEEEEEMLSSVIPDSRRENELPDFPHIDEFFTLNSTPSRSAYDEPHLLVNIEKQKLELEKRRLDIEAERLQVEKERLQIEKERLRHLDMEHERLQLEKERLQIEREKLRLQIVNSEKPSLESELGQGEKSIHQPQDIETEKLKLERERLQLEKDRLQFLKFESEKLQIEKERLQVEKERLRIQKEGHLQ.

The region spanning 4-77 (LKRKRKSNFS…EVKRRYLDWR (74 aa)) is the Myb-like domain. Residue Lys9 forms a Glycyl lysine isopeptide (Lys-Gly) (interchain with G-Cter in SUMO2) linkage. A Phosphoserine modification is found at Ser106. Residues Lys114 and Lys142 each participate in a glycyl lysine isopeptide (Lys-Gly) (interchain with G-Cter in SUMO2) cross-link. Residues 141–160 (VKVEEEERDPQSPEFEIEEE) are disordered. Phosphothreonine is present on Thr188. Residues 203-345 (LLVNIEKQKL…LRIQKEGHLQ (143 aa)) adopt a coiled-coil conformation. Residues Lys237, Lys254, and Lys273 each participate in a glycyl lysine isopeptide (Lys-Gly) (interchain with G-Cter in SUMO2) cross-link.

The chain is Myb/SANT-like DNA-binding domain-containing protein 4 (MSANTD4) from Bos taurus (Bovine).